The sequence spans 894 residues: MATSMAAASGRFESAKSIEERKEQTRNARAEVLRQAKANFEKEERRKELKRLRGEDTWMLPDVNERIEQFSQEHSVKKKKKKDKHSKKAKKEKKKKSKKQKYEKNNESSDSSSSSEDEWVEAVPSQTPDKEKAWKVKDEKSGKDDTQIIKRDEWMTVDFMSVKTVSSSSLKAEKETMRKIEQEKNQALEQSKLMERELNPYWKDGGTGLPPEDCSVSSITKVSVVEDGGLSWLRKSYLRMKEQAEKQSRNFEDIVAERYGSMEIFQSKLEDAEKAASTKEDYRRERWRKPTYSDKAQNCQESRESDLVKYGNSSRDRYATTDTAKNSNNEKFIGDEKDKRPGSLETCRRESNPRQNQEFSFGNLRAKFLRPSDDEELSFHSKGRKFEPLSSSSALVAQGSLCSGFRKPTKNSEERLTSWSRSDGRGDKKHSNQKPSETSTDEHQHVPEDPREKSQDEVLRDDPPKKEHLRDTKSTFAGSPERESIHILSVDEKNKLGAKIIKAEMMGNMELAEQLKVQLEKANKFKETITQIPKKSGVENEDQQEVILVRTDQSGRVWPVNTPGKSLESQGGRRKRQMVSTHEERERVRYFHDDDNLSLNDLVKNEKMGTAENQNKLFMRMASKFMGKTDGDYYTLDDMFVSKAAERERLGEEEENQRKKAIAEHRSLAAQMEKCLYCFDSSQFPKHLIVAIGVKVYLCLPNVRSLTEGHCLIVPLQHHRAATLLDEDIWEEIQMFRKSLVKMFEDKGLDCIFLETNMSMKKQYHMVYECIPLPKEVGDMAPIYFKKAIMESDEEWSMNKKLIDLSSKDIRKSVPRGLPYFSVDFGLHGGFAHVIEDQHKFPHYFGKEIIGGMLDIEPRLWRKGIRESFEDQRKKALQFAQWWKPYDFTKSKNY.

The segment at 1-147 (MATSMAAASG…DEKSGKDDTQ (147 aa)) is disordered. Basic and acidic residues predominate over residues 13-56 (ESAKSIEERKEQTRNARAEVLRQAKANFEKEERRKELKRLRGED). Positions 13-107 (ESAKSIEERK…KKQKYEKNNE (95 aa)) form a coiled coil. Ser-75 is subject to Phosphoserine. A compositionally biased stretch (basic residues) spans 76 to 99 (VKKKKKKDKHSKKAKKEKKKKSKK). Basic and acidic residues predominate over residues 128–147 (PDKEKAWKVKDEKSGKDDTQ). Residues 166-281 (SSSSLKAEKE…AEKAASTKED (116 aa)) adopt a coiled-coil conformation. A Glycyl lysine isopeptide (Lys-Gly) (interchain with G-Cter in SUMO2) cross-link involves residue Lys-171. The span at 270–284 (EDAEKAASTKEDYRR) shows a compositional bias: basic and acidic residues. Positions 270–483 (EDAEKAASTK…STFAGSPERE (214 aa)) are disordered. Over residues 320–330 (TTDTAKNSNNE) the composition is skewed to polar residues. Residues 332–352 (FIGDEKDKRPGSLETCRRESN) show a composition bias toward basic and acidic residues. Phosphoserine is present on residues Ser-360 and Ser-372. Basic and acidic residues-rich tracts occupy residues 410 to 430 (KNSEERLTSWSRSDGRGDKKH) and 440 to 473 (TDEHQHVPEDPREKSQDEVLRDDPPKKEHLRDTK). 2 positions are modified to phosphoserine: Ser-479 and Ser-484. Residues 502–530 (KAEMMGNMELAEQLKVQLEKANKFKETIT) are a coiled coil. A disordered region spans residues 561 to 583 (NTPGKSLESQGGRRKRQMVSTHE). Lys-604 is covalently cross-linked (Glycyl lysine isopeptide (Lys-Gly) (interchain with G-Cter in SUMO2)). Residues 644-675 (AAERERLGEEEENQRKKAIAEHRSLAAQMEKC) adopt a coiled-coil conformation.

The protein belongs to the CWF19 family.

This is CWF19-like protein 2 (CWF19L2) from Homo sapiens (Human).